A 432-amino-acid chain; its full sequence is Putative D-alanyl-D-alanine carboxypeptidase (432 aa).

Residues 7–25 (ATVLLTFSLSAFAVEYPVL) form a helical; Signal-anchor membrane-spanning segment.

The protein belongs to the peptidase S12 family. YfeW subfamily.

It localises to the cell inner membrane. It catalyses the reaction Preferential cleavage: (Ac)2-L-Lys-D-Ala-|-D-Ala. Also transpeptidation of peptidyl-alanyl moieties that are N-acyl substituents of D-alanine.. This is Putative D-alanyl-D-alanine carboxypeptidase from Salmonella choleraesuis (strain SC-B67).